Reading from the N-terminus, the 693-residue chain is Adhesion G-protein coupled receptor G1 (693 aa).

The first 25 residues, 1–25 (MTPQSLLQTTLFLLSLLFLVQGAHG), serve as a signal peptide directing secretion. Residue 26 to 33 (RGHREDFR) participates in heparin binding. Residues 26–401 (RGHREDFRFC…SVEVDAVHKH (376 aa)) lie on the Extracellular side of the membrane. Disulfide bonds link Cys-35–Cys-91 and Cys-121–Cys-177. N-linked (GlcNAc...) asparagine glycans are attached at residues Asn-39, Asn-148, and Asn-171. Residue 190–200 (LKHPQKASRRP) participates in heparin binding. In terms of domain architecture, GAIN-B spans 224 to 395 (DMVSFEEDRI…AVLMVSSVEV (172 aa)). 4 N-linked (GlcNAc...) asparagine glycosylation sites follow: Asn-234, Asn-303, Asn-324, and Asn-341. 2 disulfide bridges follow: Cys-346–Cys-377 and Cys-366–Cys-379. The segment at 346-395 (CVFWVEDPTLSSPGHWSSAGCETVRRETQTSCFCNHLTYFAVLMVSSVEV) is GPS. Residues 384–397 (YFAVLMVSSVEVDA) are stachel. Residues 402-424 (YLSLLSYVGCVVSALACLVTIAA) form a helical membrane-spanning segment. Topologically, residues 425-437 (YLCSRVPLPCRRK) are cytoplasmic. The chain crosses the membrane as a helical span at residues 438-460 (PRDYTIKVHMNLLLAVFLLDTSF). At 461 to 465 (LLSEP) the chain is on the extracellular side. Residues 466–495 (VALTGSEAGCRASAIFLHFSLLTCLSWMGL) form a helical membrane-spanning segment. Cys-475 and Cys-562 are oxidised to a cystine. Residues 496 to 510 (EGYNLYRLVVEVFGT) are Cytoplasmic-facing. The chain crosses the membrane as a helical span at residues 511-533 (YVPGYLLKLSAMGWGFPIFLVTL). The Extracellular portion of the chain corresponds to 534 to 562 (VALVDVDNYGPIILAVHRTPEGVIYPSMC). A helical membrane pass occupies residues 563–588 (WIRDSLVSYITNLGLFSLVFLFNMAM). At 589-602 (LATMVVQILRLRPH) the chain is on the cytoplasmic side. Residues 603-624 (TQKWSHVLTLLGLSLVLGLPWA) form a helical membrane-spanning segment. Residues 625 to 628 (LIFF) lie on the Extracellular side of the membrane. The chain crosses the membrane as a helical span at residues 629–654 (SFASGTFQLVVLYLFSIITSFQGFLI). Residues 655–693 (FIWYWSMRLQARGGPSPLKSNSDSARLPISSGSTSSSRI) are Cytoplasmic-facing. Residues 670–693 (SPLKSNSDSARLPISSGSTSSSRI) form a disordered region. The span at 684 to 693 (SSGSTSSSRI) shows a compositional bias: low complexity.

It belongs to the G-protein coupled receptor 2 family. LN-TM7 subfamily. As to quaternary structure, heterodimer of 2 chains generated by proteolytic processing; the large extracellular N-terminal fragment (ADGRG1 NT) and the membrane-bound C-terminal fragment (ADGRG1-CT) predominantly remain associated and non-covalently linked. ADGRG1 NT self-associates in a trans-trans manner; the homophilic interaction enhances receptor signaling. Interacts with TGM2. Interacts with heparin; leading to the reduction of ADGRG1 shedding. Interacts with COL3A1. Part of a GPCR-tetraspanin complex at least consisting of ADGRG1, CD81, eventually CD9, and GNA11 in which CD81 is enhancing the association of ADGRG1 with GNA11. Post-translationally, autoproteolytically cleaved into 2 fragments; the large extracellular N-terminal fragment (ADGRG1 NT) and the membrane-bound C-terminal fragment (ADGRG1 CT) predominantly remain associated and non-covalently linked. Shedding to yield the secreted ADGRG1 N-terminal fragment seems to involve metalloprotease(s). In terms of processing, N-glycosylated. Contains sialic acid residues. Ubiquitinated. Undergoes polyubiquitination upon activation. In terms of tissue distribution, widely distributed with highest levels found in thyroid gland, brain and heart. Expressed in a great number of tumor cells. Expression is down-regulated in different tumors from highly metastatic cells.

The protein resides in the cell membrane. The protein localises to the secreted. It localises to the membrane raft. Forms a heterodimer of 2 chains generated by proteolytic processing that remain associated through non-covalent interactions mediated by the GAIN-B domain. In the inactivated receptor, the Stachel sequence (also named stalk) is embedded in the GAIN-B domain, where it adopts a beta-strand conformation. On activation, the Stachel moves into the 7 transmembrane region and adopts a twisted hook-shaped configuration that forms contacts within the receptor, leading to coupling of a G-alpha protein, which activates signaling. The cleaved GAIN-B and N-terminal domains can then dissociate from the rest of the receptor. Functionally, adhesion G-protein coupled receptor (aGPCR) for steroid hormone 17alpha-hydroxypregnenolone (17-OH), which is involved in cell adhesion and cell-cell interactions. Ligand binding causes a conformation change that triggers signaling via guanine nucleotide-binding proteins (G proteins) and modulates the activity of downstream effectors, such as RhoA pathway. ADGRG1 is coupled to G(12) and/or G(13) G proteins (GNA12 and GNA13, respectively) and mediates the activation Rho small GTPases. Acts as a potent suppressor of ferroptosis: binding to 17-OH-binding initiates signaling that down-regulates CD36 and alleviates ferroptosis-induced liver injury. Ligand-binding also induces cell adhesion activity via association with proteins such as collagen III/COL3A1 and TGM2. Mediates cell matrix adhesion in developing neurons and hematopoietic stem cells. Involved in cortical development, specifically in maintenance of the pial basement membrane integrity and in cortical lamination: association with COL3A1 in the developing brain inhibits neuronal migration via activation of the RhoA pathway. Together with TGM2, acts as a regulator of myelination and myelin repair in oligodendrocyte precursor cells. Acts as a hemostatic sensor of shear force: G protein-coupled receptor signaling is activated in response to shear force in platelets, promoting G(13) G protein signaling, and platelet shape change and aggregation in a COL3A1-dependent manner. Acts as an inhibitor of VEGFA production thereby inhibiting angiogenesis through a signaling pathway mediated by PRKCA. Plays a role in the maintenance of hematopoietic stem cells in bone marrow niche. Plays an essential role in testis development. This chain is Adhesion G-protein coupled receptor G1, found in Homo sapiens (Human).